Here is a 172-residue protein sequence, read N- to C-terminus: Peptidyl-tRNA hydrolase (172 aa).

Tyr-10 is a tRNA binding site. His-15 functions as the Proton acceptor in the catalytic mechanism. Phe-59, Asn-61, and Asn-101 together coordinate tRNA.

It belongs to the PTH family. Monomer.

It localises to the cytoplasm. The catalysed reaction is an N-acyl-L-alpha-aminoacyl-tRNA + H2O = an N-acyl-L-amino acid + a tRNA + H(+). In terms of biological role, hydrolyzes ribosome-free peptidyl-tRNAs (with 1 or more amino acids incorporated), which drop off the ribosome during protein synthesis, or as a result of ribosome stalling. Catalyzes the release of premature peptidyl moieties from peptidyl-tRNA molecules trapped in stalled 50S ribosomal subunits, and thus maintains levels of free tRNAs and 50S ribosomes. This chain is Peptidyl-tRNA hydrolase, found in Rubrobacter xylanophilus (strain DSM 9941 / JCM 11954 / NBRC 16129 / PRD-1).